Consider the following 471-residue polypeptide: 7-hydroxymethyl chlorophyll a reductase, chloroplastic (471 aa).

A chloroplast-targeting transit peptide spans 1–44 (MARCISFLSTSSSLPCATKPPCCSVSSVLPSSPSSHQCRGRKTS).

It belongs to the FrhB family. The cofactor is FAD. Iron-sulfur cluster serves as cofactor.

It localises to the plastid. The protein localises to the chloroplast. It carries out the reaction chlorophyll a + 2 oxidized [2Fe-2S]-[ferredoxin] + H2O = 7(1)-hydroxychlorophyll a + 2 reduced [2Fe-2S]-[ferredoxin] + 2 H(+). Probable iron-sulfur flavoprotein that converts 7-hydroxymethyl chlorophyll a to chlorophyll a using ferredoxin as a reducing equivalent. Catalyzes the reduction of a hydroxymethyl group to a methyl group. The polypeptide is 7-hydroxymethyl chlorophyll a reductase, chloroplastic (HCAR) (Oryza sativa subsp. japonica (Rice)).